The chain runs to 416 residues: Diaminopimelate decarboxylase (416 aa).

Lysine 60 is modified (N6-(pyridoxal phosphate)lysine). Residues glycine 240 and 274 to 277 (EPGR) contribute to the pyridoxal 5'-phosphate site. 3 residues coordinate substrate: arginine 277, arginine 313, and tyrosine 317. Catalysis depends on cysteine 343, which acts as the Proton donor. Residues glutamate 344 and tyrosine 371 each coordinate substrate. Tyrosine 371 contributes to the pyridoxal 5'-phosphate binding site.

The protein belongs to the Orn/Lys/Arg decarboxylase class-II family. LysA subfamily. As to quaternary structure, homodimer. Pyridoxal 5'-phosphate serves as cofactor.

The enzyme catalyses meso-2,6-diaminopimelate + H(+) = L-lysine + CO2. Its pathway is amino-acid biosynthesis; L-lysine biosynthesis via DAP pathway; L-lysine from DL-2,6-diaminopimelate: step 1/1. Specifically catalyzes the decarboxylation of meso-diaminopimelate (meso-DAP) to L-lysine. This Pseudomonas fluorescens protein is Diaminopimelate decarboxylase.